A 429-amino-acid polypeptide reads, in one-letter code: MLLAGAIFVLTIVLVIWQPKGLGIGWSATLGAVLALISGVVHIGDIPVVWNIVWNATATFIAVIIISLLLDESGFFEWAALHVSRWGNGRGRLLFTYIVLLGAAVAALFANDGAALILTPIVIAMLLALGFSKGTTLAFVMAAGFIADTASLPLIVSNLVNIVSADFFGLGFTEYASVMVPVDIAAIIATLVMLHLFFRKDIPPTYDLALLKAPAKAIKDLATFRTGWIVLILLLVGFFVLEPLGIPVSAIAAVGAVILFAVANRGHAINTGKVLRGAPWQIVIFSLGMYLVVYGLRNAGLTEYLSGVLNVLADKGLWAATFGTGFLTAFLSSIMNNMPTVLVGALSIDGSTATGVIKEAMIFANVIGCDLGPKITPIGSLATLLWLHVLSQKNMTITWGYYFRTGIVMTLPVLFVTLAALALRLSFTL.

A run of 10 helical transmembrane segments spans residues 21 to 41, 46 to 66, 98 to 118, 121 to 141, 178 to 198, 228 to 248, 249 to 269, 274 to 294, 316 to 336, and 407 to 427; these read GLGI…SGVV, IPVV…VIII, IVLL…ALIL, IVIA…AFVM, VMVP…HLFF, WIVL…GIPV, SAIA…GHAI, VLRG…LVVY, GLWA…SIMN, and IVMT…RLSF.

It localises to the cell inner membrane. Its function is as follows. Involved in arsenical resistance. Thought to form the channel of an arsenite pump. This is Arsenical pump membrane protein (arsB) from Escherichia coli.